The primary structure comprises 260 residues: Cytochrome c oxidase subunit 3 (260 aa).

Over 1-15 (MAHQAHAYHMVDPSP) the chain is Mitochondrial matrix. The helical transmembrane segment at 16–34 (WPLTGAVAALLLTSGLAMW) threads the bilayer. Residues 35–40 (FHFGSM) are Mitochondrial intermembrane-facing. The helical transmembrane segment at 41–66 (ILLTLGLITMVLTMIQWWRDVIREGT) threads the bilayer. The Mitochondrial matrix portion of the chain corresponds to 67 to 72 (FQGHHT). Residues 73 to 105 (PPVQKGLRYGMILFITSEVFFFIGFFWAFYNSS) form a helical membrane-spanning segment. The Mitochondrial intermembrane segment spans residues 106 to 128 (LAPTYELGECWPPTGITPLNPFE). Residues 129 to 152 (VPLLNTAVLLASGVTVTWAHHSIM) traverse the membrane as a helical segment. The Mitochondrial matrix segment spans residues 153 to 155 (HGD). Residues 156–183 (RKEAIQSLTLTILLGLYFTALQAMEYYE) traverse the membrane as a helical segment. The Mitochondrial intermembrane segment spans residues 184–190 (APFTIAD). Residues 191–223 (GVYGSTFFVATGFHGLHVIIGSLFLSVCLLRQI) form a helical membrane-spanning segment. The Mitochondrial matrix segment spans residues 224–232 (QYHFTSKHH). The chain crosses the membrane as a helical span at residues 233–255 (FGFEAAWYWHFVDVVWLFLYVSI). The Mitochondrial intermembrane segment spans residues 256–260 (YWWGS).

It belongs to the cytochrome c oxidase subunit 3 family. Component of the cytochrome c oxidase (complex IV, CIV), a multisubunit enzyme composed of 14 subunits. The complex is composed of a catalytic core of 3 subunits MT-CO1, MT-CO2 and MT-CO3, encoded in the mitochondrial DNA, and 11 supernumerary subunits COX4I, COX5A, COX5B, COX6A, COX6B, COX6C, COX7A, COX7B, COX7C, COX8 and NDUFA4, which are encoded in the nuclear genome. The complex exists as a monomer or a dimer and forms supercomplexes (SCs) in the inner mitochondrial membrane with NADH-ubiquinone oxidoreductase (complex I, CI) and ubiquinol-cytochrome c oxidoreductase (cytochrome b-c1 complex, complex III, CIII), resulting in different assemblies (supercomplex SCI(1)III(2)IV(1) and megacomplex MCI(2)III(2)IV(2)).

It localises to the mitochondrion inner membrane. It carries out the reaction 4 Fe(II)-[cytochrome c] + O2 + 8 H(+)(in) = 4 Fe(III)-[cytochrome c] + 2 H2O + 4 H(+)(out). Component of the cytochrome c oxidase, the last enzyme in the mitochondrial electron transport chain which drives oxidative phosphorylation. The respiratory chain contains 3 multisubunit complexes succinate dehydrogenase (complex II, CII), ubiquinol-cytochrome c oxidoreductase (cytochrome b-c1 complex, complex III, CIII) and cytochrome c oxidase (complex IV, CIV), that cooperate to transfer electrons derived from NADH and succinate to molecular oxygen, creating an electrochemical gradient over the inner membrane that drives transmembrane transport and the ATP synthase. Cytochrome c oxidase is the component of the respiratory chain that catalyzes the reduction of oxygen to water. Electrons originating from reduced cytochrome c in the intermembrane space (IMS) are transferred via the dinuclear copper A center (CU(A)) of subunit 2 and heme A of subunit 1 to the active site in subunit 1, a binuclear center (BNC) formed by heme A3 and copper B (CU(B)). The BNC reduces molecular oxygen to 2 water molecules using 4 electrons from cytochrome c in the IMS and 4 protons from the mitochondrial matrix. The protein is Cytochrome c oxidase subunit 3 (mt-co3) of Xenopus laevis (African clawed frog).